A 163-amino-acid polypeptide reads, in one-letter code: Cell division protein SepF (163 aa).

The tract at residues Ser25 to Thr53 is disordered. The span at Ser30–Arg51 shows a compositional bias: basic and acidic residues.

It belongs to the SepF family. Homodimer. Interacts with FtsZ.

It is found in the cytoplasm. In terms of biological role, cell division protein that is part of the divisome complex and is recruited early to the Z-ring. Probably stimulates Z-ring formation, perhaps through the cross-linking of FtsZ protofilaments. Its function overlaps with FtsA. This is Cell division protein SepF from Heliobacterium modesticaldum (strain ATCC 51547 / Ice1).